A 549-amino-acid chain; its full sequence is Mitochondrial hydroperoxide bicyclase CYP50918A1 (549 aa).

The segment at 1 to 75 (MPDAFDVSDD…PQGNRKPAVL (75 aa)) is disordered. The span at 8–26 (SDDKQLVDQQLTRDSDSKP) shows a compositional bias: basic and acidic residues. Over residues 27-41 (AAKPASKQKPPSKVP) the composition is skewed to low complexity. Cysteine 491 contacts heme. The disordered stretch occupies residues 528–549 (DTGDHGPPNGKFSVIKPRQPKH).

The protein belongs to the cytochrome P450 family. Heme serves as cofactor.

Its subcellular location is the mitochondrion. The catalysed reaction is (13S)-hydroperoxy-(9Z,11E,15Z)-octadecatrienoate = plasmodiophorol A. The enzyme catalyses (13S)-hydroperoxy-(9Z,11E,15Z)-octadecatrienoate = plasmodiophorol B. It participates in lipid metabolism; oxylipin biosynthesis. In terms of biological role, cytochrome P450 hydroperoxide bicyclase involved in the metabolism of oxylipins natural products such as egregiachlorides, hybridalactone, ecklonialactones and related bicyclic oxylipins. Isomerizes the hydroperoxides into epoxyalcohols via epoxyallylic radical. Can use alpha-linolenic 13-hydroperoxide ((9Z,11E,13S,15Z)-13-hydroperoxy-9,11,15-octadecatrienoic, 13-HPOT) as preferred substrate to produce the heterobicyclic oxylipins plasmodiophorol A (6-oxabicyclo[3.1.0]hexane) and plasmodiophorol B (2-oxabicyclo[2.2.1]heptane) at the ratio 12:1 and a minor product plasmodiophorol C (cyclopentanediol) formed through the hydrolysis of plasmodiophorols A and B and, to a lower extent, active with linoleic acid 13-hydroperoxide ((9Z,11E,13S)-13-hydroperoxy-9,11-octadecadienoic, 13-HPOD), linoleic acid 9-hydroperoxide ((9S,10E,12Z)-9-hydroperoxy-10,12-octadecadienoic, 9-HPOD) and alpha-linolenic 9-hydroperoxide ((9S,10E,12Z,15Z)-9-hydroperoxy-10,12,15-octadecatrienoic, 9-HPOT). The protein is Mitochondrial hydroperoxide bicyclase CYP50918A1 of Plasmodiophora brassicae (Clubroot disease agent).